The chain runs to 547 residues: Putative laccase-5 (547 aa).

The first 35 residues, 1 to 35 (MGTPRGLRNAGSSSSACRFLAAFAVLLALPTLTAG), serve as a signal peptide directing secretion. Plastocyanin-like domains are found at residues 43-159 (NVQM…PKRG) and 170-323 (ELPP…YAPT). N-linked (GlcNAc...) asparagine glycans are attached at residues asparagine 48 and asparagine 89. Residues histidine 93, histidine 95, histidine 138, and histidine 140 each coordinate Cu cation. N-linked (GlcNAc...) asparagine glycosylation is found at asparagine 199, asparagine 215, asparagine 251, asparagine 311, asparagine 342, asparagine 349, asparagine 388, asparagine 395, asparagine 405, and asparagine 430. Residues 408 to 531 (FVRPRVALLE…SMAWLVNDGP (124 aa)) enclose the Plastocyanin-like 3 domain. Histidine 448, histidine 451, histidine 453, histidine 510, cysteine 511, histidine 512, and histidine 516 together coordinate Cu cation.

It belongs to the multicopper oxidase family. Requires Cu cation as cofactor.

It localises to the secreted. The protein localises to the extracellular space. It is found in the apoplast. The enzyme catalyses 4 hydroquinone + O2 = 4 benzosemiquinone + 2 H2O. Lignin degradation and detoxification of lignin-derived products. The polypeptide is Putative laccase-5 (LAC5) (Oryza sativa subsp. japonica (Rice)).